We begin with the raw amino-acid sequence, 266 residues long: Beta-lactamase OXA-19 (266 aa).

Residues 1–20 form the signal peptide; sequence MKTFAAYVITACLSSTALAS. Residue Ser-67 is the Acyl-ester intermediate of the active site. Lys-70 is modified (N6-carboxylysine). Residue 205-207 participates in substrate binding; that stretch reads KTG.

This sequence belongs to the class-D beta-lactamase family.

It carries out the reaction a beta-lactam + H2O = a substituted beta-amino acid. This is Beta-lactamase OXA-19 (bla) from Pseudomonas aeruginosa.